A 132-amino-acid chain; its full sequence is Small ribosomal subunit protein bS6 (132 aa).

Residues 99-132 (ASPMVKAKDERRGDRREDFANETADDADAGDSEE) are disordered. Over residues 104–117 (KAKDERRGDRREDF) the composition is skewed to basic and acidic residues. Acidic residues predominate over residues 121-132 (TADDADAGDSEE).

The protein belongs to the bacterial ribosomal protein bS6 family.

Its function is as follows. Binds together with bS18 to 16S ribosomal RNA. The polypeptide is Small ribosomal subunit protein bS6 (Serratia proteamaculans (strain 568)).